We begin with the raw amino-acid sequence, 99 residues long: DNA-directed RNA polymerase subunit Rpo11 (99 aa).

Belongs to the archaeal Rpo11/eukaryotic RPB11/RPC19 RNA polymerase subunit family. In terms of assembly, part of the RNA polymerase complex. Forms an Rpo3-Rpo10-Rpo11-Rpo12 complex upon coexpression.

Its subcellular location is the cytoplasm. It carries out the reaction RNA(n) + a ribonucleoside 5'-triphosphate = RNA(n+1) + diphosphate. In terms of biological role, DNA-dependent RNA polymerase (RNAP) catalyzes the transcription of DNA into RNA using the four ribonucleoside triphosphates as substrates. The sequence is that of DNA-directed RNA polymerase subunit Rpo11 from Methanocaldococcus jannaschii (strain ATCC 43067 / DSM 2661 / JAL-1 / JCM 10045 / NBRC 100440) (Methanococcus jannaschii).